Here is a 90-residue protein sequence, read N- to C-terminus: YcgL domain-containing protein Spro_2755 (90 aa).

In terms of domain architecture, YcgL spans 1 to 85; the sequence is MLCVIYRSSK…PLENLLKQHL (85 aa).

This is YcgL domain-containing protein Spro_2755 from Serratia proteamaculans (strain 568).